A 54-amino-acid polypeptide reads, in one-letter code: ATP synthase F(0) complex subunit 8 (54 aa).

The chain crosses the membrane as a helical span at residues 13 to 35; the sequence is ALSLWVCFPLMMLSLSSFLPLTL.

The protein belongs to the ATPase protein 8 family. Component of the ATP synthase complex composed at least of ATP5F1A/subunit alpha, ATP5F1B/subunit beta, ATP5MC1/subunit c (homooctomer), MT-ATP6/subunit a, MT-ATP8/subunit 8, ATP5ME/subunit e, ATP5MF/subunit f, ATP5MG/subunit g, ATP5MK/subunit k, ATP5MJ/subunit j, ATP5F1C/subunit gamma, ATP5F1D/subunit delta, ATP5F1E/subunit epsilon, ATP5PF/subunit F6, ATP5PB/subunit b, ATP5PD/subunit d, ATP5PO/subunit OSCP. ATP synthase complex consists of a soluble F(1) head domain (subunits alpha(3) and beta(3)) - the catalytic core - and a membrane F(0) domain - the membrane proton channel (subunits c, a, 8, e, f, g, k and j). These two domains are linked by a central stalk (subunits gamma, delta, and epsilon) rotating inside the F1 region and a stationary peripheral stalk (subunits F6, b, d, and OSCP).

The protein localises to the mitochondrion membrane. Subunit 8, of the mitochondrial membrane ATP synthase complex (F(1)F(0) ATP synthase or Complex V) that produces ATP from ADP in the presence of a proton gradient across the membrane which is generated by electron transport complexes of the respiratory chain. ATP synthase complex consist of a soluble F(1) head domain - the catalytic core - and a membrane F(1) domain - the membrane proton channel. These two domains are linked by a central stalk rotating inside the F(1) region and a stationary peripheral stalk. During catalysis, ATP synthesis in the catalytic domain of F(1) is coupled via a rotary mechanism of the central stalk subunits to proton translocation. In vivo, can only synthesize ATP although its ATP hydrolase activity can be activated artificially in vitro. Part of the complex F(0) domain. The sequence is that of ATP synthase F(0) complex subunit 8 from Myxine glutinosa (Atlantic hagfish).